The primary structure comprises 446 residues: Putative diacyglycerol O-acyltransferase MT3481 (446 aa).

Catalysis depends on His129, which acts as the Proton acceptor. A disordered region spans residues 425 to 446 (SRALPSAARRGRPSVPTARARH).

It belongs to the long-chain O-acyltransferase family.

It carries out the reaction an acyl-CoA + a 1,2-diacyl-sn-glycerol = a triacyl-sn-glycerol + CoA. It participates in glycerolipid metabolism; triacylglycerol biosynthesis. The chain is Putative diacyglycerol O-acyltransferase MT3481 from Mycobacterium tuberculosis (strain CDC 1551 / Oshkosh).